Reading from the N-terminus, the 189-residue chain is ADP-ribosylation factor H (189 aa).

GTP is bound by residues 34-40 (DGAGKST), 75-79 (DVGGQ), and 134-137 (NKQD).

The protein belongs to the small GTPase superfamily. Arf family.

It localises to the golgi apparatus. In terms of biological role, GTP-binding protein that may be involved in protein trafficking. May modulate vesicle budding and uncoating within the Golgi apparatus. This Dictyostelium discoideum (Social amoeba) protein is ADP-ribosylation factor H (arrH).